The primary structure comprises 224 residues: Menaquinol:cytochrome c reductase cytochrome b subunit (224 aa).

The chain crosses the membrane as a helical span at residues F37–L57. Position 42 (Y42) interacts with heme b. C43 provides a ligand contact to heme c. Residues R91, H94, H108, and R111 each contribute to the heme b site. 3 helical membrane passes run W96–G116, W126–L146, and I195–I215. H196 and H211 together coordinate heme b. Heme c contacts are provided by R216 and I220. Position 221 (S221) interacts with heme b.

The protein belongs to the cytochrome b family. The main subunits of the menaquinol:cytochrome c complex are a Rieske-type iron-sulfur protein (QcrA), a cytochrome b (QcrB) and a cytochrome c (QcrC). It depends on heme b as a cofactor. Heme c is required as a cofactor.

It is found in the cell membrane. Its function is as follows. Component of the menaquinol:cytochrome c reductase complex. The protein is Menaquinol:cytochrome c reductase cytochrome b subunit of Bacillus subtilis (strain 168).